The sequence spans 266 residues: UPF0246 protein Pcryo_0542 (266 aa).

The protein belongs to the UPF0246 family.

In Psychrobacter cryohalolentis (strain ATCC BAA-1226 / DSM 17306 / VKM B-2378 / K5), this protein is UPF0246 protein Pcryo_0542.